The sequence spans 75 residues: Protein Tlp homolog (75 aa).

The segment at 48–75 is disordered; that stretch reads KNQRRREALDGMREEIKDEARDKKNGYM.

It belongs to the Tlp family.

This is Protein Tlp homolog from Clostridium botulinum (strain 657 / Type Ba4).